The primary structure comprises 2382 residues: Highly reducing polyketide synthase srdA (2382 aa).

The interval 1-25 (MAPHSTLDSDYSSGSSTPTSASAAG) is disordered. A Ketosynthase family 3 (KS3) domain is found at 44–474 (QEPIAIIGMG…GANAHAILEA (431 aa)). Active-site for beta-ketoacyl synthase activity residues include C217, H352, and H390. The malonyl-CoA:ACP transacylase (MAT) domain stretch occupies residues 580 to 891 (VFTGQGAQWP…HYGSALSRGK (312 aa)). The active-site For malonyltransferase activity is the S672. Residues 971–1108 (HDLLGSQVHG…GLVKIDSAPA (138 aa)) form an N-terminal hotdog fold region. Residues 971–1274 (HDLLGSQVHG…RQVSYQSGIQ (304 aa)) form a dehydratase (DH) domain region. Residues 971–1275 (HDLLGSQVHG…QVSYQSGIQQ (305 aa)) enclose the PKS/mFAS DH domain. H1003 functions as the Proton acceptor; for dehydratase activity in the catalytic mechanism. Residues 1121 to 1275 (MEPQAPRTWY…QVSYQSGIQQ (155 aa)) form a C-terminal hotdog fold region. D1189 functions as the Proton donor; for dehydratase activity in the catalytic mechanism. Residues 1668 to 1979 (GQIDSIFFRR…AKGHSGSVVV (312 aa)) form an enoyl reductase (ER) domain region. Residues 2004 to 2180 (SYLLVGCLGG…ATSIGLGMIS (177 aa)) form a ketoreductase (KR) domain region. One can recognise a Carrier domain in the interval 2298 to 2376 (SVEDAVLKMI…LLSELITKKM (79 aa)). An O-(pantetheine 4'-phosphoryl)serine modification is found at S2335.

Highly reducing polyketide synthase; part of the gene cluster that mediates the biosynthesis of sordarial, a salicylic aldehyde structurally related to the phytotoxin pyriculol. The most interesting aspect of this pathway is formation of an aromatic product from the highly reducing polyketide synthase srdA. SrdA synthesizes a reduced polyketide chain from one molecule of acetyl-CoA and five molecules of malonyl-CoA. The polyketide chain is then reductively released as an aldehyde. The oxidoreductases srdC, srdD and srdE then oxidize one of the hydroxy groups to facilitate the intramolecular aldol condensation, followed by dehydration to yield a salicylic aldehyde. This aldehyde can undergo facile reduction by endogenous reductases to yield the alcohol 1-hydroxy-2-hydroxymethyl-3-pent-1,3-dienylbenzene. The flavin-dependent srdI counteract against the propensity of the aldehydes to be reduced under physiological conditions and is responsible for reoxidizing 1-hydroxy-2-hydroxymethyl-3-pent-1,3-dienylbenzene back to the salicylic aldehyde. This salicylic aldehyde is then selectively epoxidized by the cupin-domain-containing oxidoreductase srdB to yield the epoxide, which can be hydrolyzed stereoselectively by the hydrolase srdG to give the final product sordarial. In Neurospora crassa (strain ATCC 24698 / 74-OR23-1A / CBS 708.71 / DSM 1257 / FGSC 987), this protein is Highly reducing polyketide synthase srdA.